Reading from the N-terminus, the 323-residue chain is Ubiquinone biosynthesis protein COQ4, mitochondrial (323 aa).

The Zn(2+) site is built by H203, D204, H207, and E219.

This sequence belongs to the COQ4 family. As to quaternary structure, component of a multi-subunit COQ enzyme complex, composed of at least COQ3, COQ4, COQ5, COQ6, COQ7 and COQ9. Zn(2+) is required as a cofactor.

It is found in the mitochondrion inner membrane. It carries out the reaction a 4-hydroxy-3-methoxy-5-(all-trans-polyprenyl)benzoate + H(+) = a 2-methoxy-6-(all-trans-polyprenyl)phenol + CO2. Its pathway is cofactor biosynthesis; ubiquinone biosynthesis. Functionally, lyase that catalyzes the C1-decarboxylation of 4-hydroxy-3-methoxy-5-(all-trans-polyprenyl)benzoic acid into 2-methoxy-6-(all-trans-polyprenyl)phenol during ubiquinone biosynthesis. In Eremothecium gossypii (strain ATCC 10895 / CBS 109.51 / FGSC 9923 / NRRL Y-1056) (Yeast), this protein is Ubiquinone biosynthesis protein COQ4, mitochondrial.